A 657-amino-acid chain; its full sequence is MAKETFYITTPIYYPSGNLHIGHAYSTVAGDVIARYKRMQGYDVRYLTGTDEHGQKIQEKAQKAGKTEIEYLDEMIAGIKQLWAKLEISNDDFIRTTEERHKHVVEQVFERLLKQGDIYLGEYEGWYSVPDETYYTESQLVDPQYENGKIIGGKSPDSGHEVELVKEESYFFNISKYTDRLLEFYDQNPDFIQPPSRKNEMINNFIKPGLADLAVSRTSFNWGVHVPSNPKHVVYVWIDALVNYISALGYLSDDESLFNKYWPADIHLMAKEIVRFHSIIWPILLMALDLPLPKKVFAHGWILMKDGKMSKSKGNVVDPNILIDRYGLDATRYYLMRELPFGSDGVFTPEAFVERTNFDLANDLGNLVNRTISMVNKYFDGELPAYQGPLHELDEEMEAMALETVKSYTESMESLQFSVALSTVWKFISRTNKYIDETTPWVLAKDDSQKDMLGNVMAHLVENIRYAAVLLRPFLTHAPKEIFEQLNINNPQFMEFSSLEQYGVLTESIMVTGQPKPIFPRLDSEAEIAYIKESMQPPATEEEKEEIPSKPQIDIKDFDKVEIKAATIIDAEHVKKSDKLLKIQVDLDSEQRQIVSGIAKFYTPDDIIGKKVAVVTNLKPAKLMGQKSEGMILSAEKDGVLTLVSLPSAIPNGAVIK.

The short motif at 13 to 23 is the 'HIGH' region element; the sequence is YYPSGNLHIGH. The 'KMSKS' region motif lies at 308-312; it reads KMSKS. K311 provides a ligand contact to ATP. The tRNA-binding domain maps to 557-657; the sequence is DFDKVEIKAA…SAIPNGAVIK (101 aa).

The protein belongs to the class-I aminoacyl-tRNA synthetase family. MetG type 2B subfamily. As to quaternary structure, homodimer.

The protein resides in the cytoplasm. It carries out the reaction tRNA(Met) + L-methionine + ATP = L-methionyl-tRNA(Met) + AMP + diphosphate. Is required not only for elongation of protein synthesis but also for the initiation of all mRNA translation through initiator tRNA(fMet) aminoacylation. In Staphylococcus aureus (strain Mu50 / ATCC 700699), this protein is Methionine--tRNA ligase.